Consider the following 520-residue polypeptide: Bifunctional purine biosynthesis protein PurH (520 aa).

The MGS-like domain occupies 1 to 147; the sequence is MAKIGRALIS…KNNRDVTVVV (147 aa).

Belongs to the PurH family.

The catalysed reaction is (6R)-10-formyltetrahydrofolate + 5-amino-1-(5-phospho-beta-D-ribosyl)imidazole-4-carboxamide = 5-formamido-1-(5-phospho-D-ribosyl)imidazole-4-carboxamide + (6S)-5,6,7,8-tetrahydrofolate. It carries out the reaction IMP + H2O = 5-formamido-1-(5-phospho-D-ribosyl)imidazole-4-carboxamide. The protein operates within purine metabolism; IMP biosynthesis via de novo pathway; 5-formamido-1-(5-phospho-D-ribosyl)imidazole-4-carboxamide from 5-amino-1-(5-phospho-D-ribosyl)imidazole-4-carboxamide (10-formyl THF route): step 1/1. It participates in purine metabolism; IMP biosynthesis via de novo pathway; IMP from 5-formamido-1-(5-phospho-D-ribosyl)imidazole-4-carboxamide: step 1/1. The protein is Bifunctional purine biosynthesis protein PurH of Citrifermentans bemidjiense (strain ATCC BAA-1014 / DSM 16622 / JCM 12645 / Bem) (Geobacter bemidjiensis).